The sequence spans 217 residues: Enoyl-CoA-hydratase (217 aa).

The protein belongs to the enoyl-CoA hydratase/isomerase family.

The catalysed reaction is a (3S)-3-hydroxyacyl-CoA = a (2E)-enoyl-CoA + H2O. It catalyses the reaction a 4-saturated-(3S)-3-hydroxyacyl-CoA = a (3E)-enoyl-CoA + H2O. It participates in antibiotic biosynthesis; vancomycin biosynthesis. Its function is as follows. Involved in the biosynthesis of the nonproteinogenic amino acid monomer (S)-3,5-dihydroxyphenylglycine (Dpg) responsible of the production of vancomycin and teicoplanin antibiotics. Catalyzes the syn-addition of a water molecule across the double bond of a trans-2-enoyl-CoA thioester, resulting in the formation of a beta-hydroxyacyl-CoA thioester. Physiologically, DpgB could act as a dehydratase, facilitating the aromatization of the DPA-S-DgpA or DPA-S-CoA intermediate. This Amycolatopsis orientalis (Nocardia orientalis) protein is Enoyl-CoA-hydratase (dpgB).